Consider the following 412-residue polypeptide: Multifunctional CCA protein (412 aa).

Positions 8 and 11 each coordinate ATP. The CTP site is built by Gly-8 and Arg-11. Mg(2+)-binding residues include Glu-21 and Asp-23. ATP is bound by residues Arg-91, Arg-137, and Arg-140. Positions 91, 137, and 140 each coordinate CTP. One can recognise an HD domain in the interval 228–329 (TGIHTLMTLA…LKLFNAIDVW (102 aa)).

Belongs to the tRNA nucleotidyltransferase/poly(A) polymerase family. Bacterial CCA-adding enzyme type 1 subfamily. In terms of assembly, monomer. Can also form homodimers and oligomers. The cofactor is Mg(2+). Ni(2+) is required as a cofactor.

It catalyses the reaction a tRNA precursor + 2 CTP + ATP = a tRNA with a 3' CCA end + 3 diphosphate. The catalysed reaction is a tRNA with a 3' CCA end + 2 CTP + ATP = a tRNA with a 3' CCACCA end + 3 diphosphate. In terms of biological role, catalyzes the addition and repair of the essential 3'-terminal CCA sequence in tRNAs without using a nucleic acid template. Adds these three nucleotides in the order of C, C, and A to the tRNA nucleotide-73, using CTP and ATP as substrates and producing inorganic pyrophosphate. tRNA 3'-terminal CCA addition is required both for tRNA processing and repair. Also involved in tRNA surveillance by mediating tandem CCA addition to generate a CCACCA at the 3' terminus of unstable tRNAs. While stable tRNAs receive only 3'-terminal CCA, unstable tRNAs are marked with CCACCA and rapidly degraded. The protein is Multifunctional CCA protein of Yersinia pseudotuberculosis serotype I (strain IP32953).